The chain runs to 328 residues: Biotin synthase (328 aa).

The region spanning 42–267 (YHVQLASLLS…LMPGSRVRLS (226 aa)) is the Radical SAM core domain. Residues C57, C61, and C64 each coordinate [4Fe-4S] cluster. [2Fe-2S] cluster-binding residues include C101, C133, C193, and R265.

The protein belongs to the radical SAM superfamily. Biotin synthase family. As to quaternary structure, homodimer. [4Fe-4S] cluster serves as cofactor. The cofactor is [2Fe-2S] cluster.

The enzyme catalyses (4R,5S)-dethiobiotin + (sulfur carrier)-SH + 2 reduced [2Fe-2S]-[ferredoxin] + 2 S-adenosyl-L-methionine = (sulfur carrier)-H + biotin + 2 5'-deoxyadenosine + 2 L-methionine + 2 oxidized [2Fe-2S]-[ferredoxin]. It functions in the pathway cofactor biosynthesis; biotin biosynthesis; biotin from 7,8-diaminononanoate: step 2/2. In terms of biological role, catalyzes the conversion of dethiobiotin (DTB) to biotin by the insertion of a sulfur atom into dethiobiotin via a radical-based mechanism. The chain is Biotin synthase from Synechococcus sp. (strain CC9311).